The primary structure comprises 1888 residues: MGCTVSLVCCEALEPLPSCGPQPPGTPPGPARPERCEPGGAAPDPRRRLLLQPEDLEAPKTHHFKVKAFKKVKPCGICRQAITREGCVCKVCSFSCHRKCQAKVAAPCVPPSSHELVPITTETVPKNVVDVGEGDCRVGSSPKNLEEGGSMRVSPSIQPQPQSQPTSLSRNTSVSRAMEDSCELDLVYVTERIIAVSFPSTANEENFRSNLREVAQMLKSKHGGNYLLFNLSEQRPDITKLHAKVLEFGWPDLHTPALEKICSVCKAMDTWLNADPHNVVVLHNKGNRGRIGVVIAAYLHYSNISASADQALDRFAMKRFYEDKIVPIGQPSQRRYVHYFSGLLSGSIKMNNKPLFLHHVIMHGIPNFESKGGCRPFLRIYQAMQPVYTSGIYNIPGDSQASICITIEPGLLLKGDILLKCYHKKFRSPARDVIFRVQFHTCAIHDLGVVFGKEDLDEAFKDDRFPDYGKVEFVFSYGPEKIQGMEHLENGPSVSVDYNTSDPLIRWDSYDNFSGHREDGMEEVVGHTQGPLDGSLYAKVKKKDSLNGSSGPVTTARPALSATPNHVEHTLSVSSDSGNSTASTKTDKTDEPVSGATTAPAALSPQEKKELDRLLSGFGVDREKQGAMYRAQQLRSHPGGGPTVPSPGRHIVPAQVHVNGGALASERETDILDDELPIQDGQSGGSMGTLSSLDGVTNTSESGYPETLSPLTNGLDKPYSTEPVLNGGGYPYEAANRVIPVHSSHSAPIRPSYSAQEGLAGYQREGPHPAWSQQVTSAHCGCDPSGLFRSQSFPDVEPQLPQAPTRGGSSREAVQRGLNSWQQQQPHPPPRQQERSPLQSLARSKPSPQLSAETPVAALPEFPRAASQQEIEQSIETLNMLMLDLEPASAAAPLHKSQSVPGAWPGASPLSSQPLLGSSRQSHPLTQSRSGYIPSGHSLGTPELVSSGRPYSPYDYQLHPAGSNQSFHPKSPASSTFLPSPHSSAGPQEPPASLPGLIAQPQLPPKETTSDPSRTPEEEPLNLEGLVAHRVAGVQARERQPAEPPGPLRRRAASDGQYENQSPEATSPRSPGVRSPVQCVSPELALTIALNPGGRPKEPHLHSYKEAFEEMEGTSPSSPPHSVARSPPGLAKTPLSALGLKPHNPADILLHPTGVARRLIQPEEDEGEEVTKPPEEPRSYVESVARTAVAGPRAQDVEPKSFSAPAAHAYGHETPLRNGTPGGSFVSPSPLSTSSPILSADSTSVGSFPSVVSSDQGPRTPFQPMLDSSIRSGSLGQPSPAALSYQSSSPVPVGGSSYNSPDYSLQPFSSSPESQGQPQYSAASVHMVPGSPQARHRTVGTNTPPSPGFGRRAVNPTMAAPGSPSLSHRQVMGPSGPGFHGNVVSGHPASAATTPGSPSLGRHPVGSHQVPGLHSSVVTTPGSPSLGRHPGAHQGNLASSLHSNAVISPGSPSLGRHLGGSGSVVPGSPSLDRHAAYGGYSTPEDRRPTLSRQSSASGYQAPSTPSFPVSPAYYPGLSSPATSPSPDSAAFRQGSPTPALPEKRRMSVGDRAGSLPNYATINGKVSSSPVANGMASGSSTVSFSHTLPDFSKYSMPDNSPETRAKVKFVQDTSKYWYKPEISREQAIALLKDQEPGAFIIRDSHSFRGAYGLAMKVSSPPPTITQQGKKGDMTHELVRHFLIETGPRGVKLKGCPNEPNFGSLSALVYQHSVIPLALPCKLVIPSRDPTDESKDSSGPANSTTDLLKQGAACNVLFVNSVDMESLTGPQAISKATSETLAADPTPAATIVHFKVSAQGITLTDNQRKLFFRRHYPLNTVTFCDLDPQERKWMKTEGGAPAKLFGFVARKQGSTTDNACHLFAELDPNQPASAIVNFVSKVMLSAGQKR.

Over residues 21–31 (PQPPGTPPGPA) the composition is skewed to pro residues. Residues 21–45 (PQPPGTPPGPARPERCEPGGAAPDP) are disordered. A Phorbol-ester/DAG-type zinc finger spans residues 61 to 108 (THHFKVKAFKKVKPCGICRQAITREGCVCKVCSFSCHRKCQAKVAAPC). Residues 132 to 174 (GEGDCRVGSSPKNLEEGGSMRVSPSIQPQPQSQPTSLSRNTSV) form a disordered region. Low complexity predominate over residues 154–167 (SPSIQPQPQSQPTS). The 173-residue stretch at 175 to 347 (SRAMEDSCEL…HYFSGLLSGS (173 aa)) folds into the Phosphatase tensin-type domain. Positions 352–478 (NKPLFLHHVI…GKVEFVFSYG (127 aa)) constitute a C2 tensin-type domain. Phosphoserine is present on residues S509 and S535. Position 537 is a phosphotyrosine (Y537). 3 disordered regions span residues 543–608 (KDSL…PQEK), 696–722 (VTNT…YSTE), and 789–854 (RSQS…SAET). S549 carries the phosphoserine modification. Over residues 571-584 (LSVSSDSGNSTAST) the composition is skewed to polar residues. S604 carries the post-translational modification Phosphoserine. The residue at position 792 (S792) is a Phosphoserine. The span at 835 to 852 (RSPLQSLARSKPSPQLSA) shows a compositional bias: polar residues. S867 carries the phosphoserine modification. Disordered stretches follow at residues 893–1077 (PLHK…RSPV) and 1109–1555 (EEME…AGSL). The segment covering 905–922 (PGASPLSSQPLLGSSRQS) has biased composition (low complexity). Phosphoserine is present on residues S930, S935, and S952. The span at 962–986 (GSNQSFHPKSPASSTFLPSPHSSAG) shows a compositional bias: polar residues. At T1015 the chain carries Phosphothreonine. S1054 carries the post-translational modification Phosphoserine. The segment covering 1057-1069 (QYENQSPEATSPR) has biased composition (polar residues). Residue Y1058 is modified to Phosphotyrosine. Phosphoserine occurs at positions 1062, 1118, and 1122. Residues 1169–1179 (EVTKPPEEPRS) are compositionally biased toward basic and acidic residues. The span at 1227-1239 (SPSPLSTSSPILS) shows a compositional bias: low complexity. Residues 1240-1257 (ADSTSVGSFPSVVSSDQG) show a composition bias toward polar residues. S1279 is modified (phosphoserine). The span at 1284 to 1300 (SYQSSSPVPVGGSSYNS) shows a compositional bias: low complexity. The segment covering 1301-1322 (PDYSLQPFSSSPESQGQPQYSA) has biased composition (polar residues). S1321 carries an O-linked (GalNAc...) serine glycan. Residue S1331 is modified to Phosphoserine. Position 1343 is a phosphothreonine (T1343). S1346 is modified (phosphoserine). T1420 carries the phosphothreonine modification. A Phosphoserine modification is found at S1423. Residues 1436 to 1446 (NLASSLHSNAV) show a composition bias toward polar residues. S1448, S1463, and S1468 each carry phosphoserine. Polar residues predominate over residues 1490–1507 (LSRQSSASGYQAPSTPSF). The segment covering 1518-1530 (SSPATSPSPDSAA) has biased composition (low complexity). Phosphoserine is present on residues S1535, S1547, S1554, and S1599. The SH2 domain occupies 1616-1725 (WYKPEISREQ…ALPCKLVIPS (110 aa)). S1741 carries the post-translational modification Phosphoserine. Positions 1751–1885 (ACNVLFVNSV…FVSKVMLSAG (135 aa)) constitute a PTB domain.

Belongs to the PTEN phosphatase protein family. In terms of assembly, binds to actin filaments and interacts with phosphotyrosine-containing proteins. Interacts with STARD8. Interacts with protein phosphatase PPP1CA. Interacts (via N-terminus) with Rho GTPase-activating protein DLC1; the interaction is decreased by phosphorylation of TNS1. Interacts with tyrosine-phosphorylated proteins BCAR1/p130Cas and PTK2/FAK; the interactions are increased by phosphorylation of TNS1. In terms of processing, extensively phosphorylated on serine and threonine residues in a p38 MAPK-dependent manner which reduces interaction with DLC1 and increases interaction with tyrosine-phosphorylated proteins including BCAR1/p130cas and PTK2/FAK. The majority of the phosphorylated Ser/Thr residues are immediately adjacent to a proline residue. Also phosphorylated on tyrosine residues. Rapidly cleaved by calpain II.

It localises to the cell surface. Its subcellular location is the cell junction. The protein localises to the focal adhesion. It is found in the cytoplasm. The protein resides in the cytoskeleton. May act as a protein phosphatase and/or a lipid phosphatase. Involved in fibrillar adhesion formation. Essential for myofibroblast differentiation and myofibroblast-mediated extracellular matrix deposition. Enhances RHOA activation in the presence of DLC1. Plays a role in cell polarization and migration. May be involved in cartilage development and in linking signal transduction pathways to the cytoskeleton. This chain is Tensin-1, found in Mus musculus (Mouse).